The primary structure comprises 491 residues: Glutamyl-tRNA(Gln) amidotransferase subunit A (491 aa).

Catalysis depends on charge relay system residues Lys-76 and Ser-154. Residue Ser-178 is the Acyl-ester intermediate of the active site.

This sequence belongs to the amidase family. GatA subfamily. As to quaternary structure, heterotrimer of A, B and C subunits.

The catalysed reaction is L-glutamyl-tRNA(Gln) + L-glutamine + ATP + H2O = L-glutaminyl-tRNA(Gln) + L-glutamate + ADP + phosphate + H(+). In terms of biological role, allows the formation of correctly charged Gln-tRNA(Gln) through the transamidation of misacylated Glu-tRNA(Gln) in organisms which lack glutaminyl-tRNA synthetase. The reaction takes place in the presence of glutamine and ATP through an activated gamma-phospho-Glu-tRNA(Gln). This is Glutamyl-tRNA(Gln) amidotransferase subunit A from Cereibacter sphaeroides (strain KD131 / KCTC 12085) (Rhodobacter sphaeroides).